The sequence spans 103 residues: Leukocyte cysteine proteinase inhibitor 1 (103 aa).

Met-1 bears the Blocked amino end (Met); partial mark. A disordered region spans residues 1-20 (MESEEMLAGGLTEPRPATPE). The short motif at 51–55 (QVVAG) is the Secondary area of contact element.

The protein belongs to the cystatin family.

The protein localises to the cytoplasm. Potent inhibitor of cathepsins L and S, and papain. In Sus scrofa (Pig), this protein is Leukocyte cysteine proteinase inhibitor 1.